A 356-amino-acid chain; its full sequence is Putative KilA-N domain-containing protein R878 (356 aa).

The segment covering 1–12 (MKVRKSNNKPLK) has biased composition (basic residues). A disordered region spans residues 1-114 (MKVRKSNNKP…DDDGSDNNVY (114 aa)). Residues 14-46 (SASFTSGTKTGSKSAKSVNSGSKSMKSTKSSSK) show a composition bias toward low complexity. A compositionally biased stretch (acidic residues) spans 66–114 (SDNDELSDNEISDNESSDDDEISDNESSDDDEISDNEISDDDGSDNNVY). Positions 130-239 (NYSKGKFGNF…VRIGFCMEEW (110 aa)) constitute a KilA-N domain.

The chain is Putative KilA-N domain-containing protein R878 from Acanthamoeba polyphaga (Amoeba).